We begin with the raw amino-acid sequence, 126 residues long: Muscarinic acetylcholine receptor M4 (126 aa).

A disordered region spans residues 1 to 90 (MKQSVKKPPP…LQPRTLNPAS (90 aa)). The Cytoplasmic segment spans residues 1–126 (MKQSVKKPPP…PAGMRPAANV (126 aa)). Pro residues predominate over residues 28-39 (APPPVLPPPPRP). The segment covering 47–57 (NESSSGSATQN) has biased composition (polar residues). The segment covering 64–75 (TELSTTEATTPA) has biased composition (low complexity).

This sequence belongs to the G-protein coupled receptor 1 family. Muscarinic acetylcholine receptor subfamily. CHRM4 sub-subfamily.

The protein localises to the cell membrane. It localises to the postsynaptic cell membrane. Functionally, the muscarinic acetylcholine receptor mediates various cellular responses, including inhibition of adenylate cyclase, breakdown of phosphoinositides and modulation of potassium channels through the action of G proteins. Primary transducing effect is inhibition of adenylate cyclase. May couple to multiple functional responses in cell lines. This chain is Muscarinic acetylcholine receptor M4 (CHRM4), found in Bos taurus (Bovine).